Consider the following 151-residue polypeptide: Ribosome maturation factor RimP (151 aa).

Belongs to the RimP family.

Its subcellular location is the cytoplasm. Functionally, required for maturation of 30S ribosomal subunits. The protein is Ribosome maturation factor RimP of Endomicrobium trichonymphae.